Consider the following 450-residue polypeptide: Glucose-6-phosphate isomerase (450 aa).

Phosphothreonine is present on Thr-39. Glu-291 serves as the catalytic Proton donor. Catalysis depends on residues His-312 and Lys-426.

Belongs to the GPI family.

Its subcellular location is the cytoplasm. It catalyses the reaction alpha-D-glucose 6-phosphate = beta-D-fructose 6-phosphate. Its pathway is carbohydrate biosynthesis; gluconeogenesis. The protein operates within carbohydrate degradation; glycolysis; D-glyceraldehyde 3-phosphate and glycerone phosphate from D-glucose: step 2/4. Catalyzes the reversible isomerization of glucose-6-phosphate to fructose-6-phosphate. In Bacillus anthracis, this protein is Glucose-6-phosphate isomerase.